An 81-amino-acid polypeptide reads, in one-letter code: Small ribosomal subunit protein uS17 (81 aa).

It belongs to the universal ribosomal protein uS17 family. Part of the 30S ribosomal subunit.

Functionally, one of the primary rRNA binding proteins, it binds specifically to the 5'-end of 16S ribosomal RNA. This Protochlamydia amoebophila (strain UWE25) protein is Small ribosomal subunit protein uS17.